Here is a 436-residue protein sequence, read N- to C-terminus: mRNA cap guanine-N(7) methyltransferase (436 aa).

The disordered stretch occupies residues M1–L50. Positions S141–V424 constitute an mRNA cap 0 methyltransferase domain. Residue N150–N151 coordinates mRNA. Residues K154, G172, D194, D223, Q249, and Y254 each coordinate S-adenosyl-L-methionine.

This sequence belongs to the class I-like SAM-binding methyltransferase superfamily. mRNA cap 0 methyltransferase family.

Its subcellular location is the nucleus. It carries out the reaction a 5'-end (5'-triphosphoguanosine)-ribonucleoside in mRNA + S-adenosyl-L-methionine = a 5'-end (N(7)-methyl 5'-triphosphoguanosine)-ribonucleoside in mRNA + S-adenosyl-L-homocysteine. Its function is as follows. Responsible for methylating the 5'-cap structure of mRNAs. The sequence is that of mRNA cap guanine-N(7) methyltransferase (ABD1) from Saccharomyces cerevisiae (strain ATCC 204508 / S288c) (Baker's yeast).